Consider the following 225-residue polypeptide: PKHD-type hydroxylase YbiX (225 aa).

Positions 78–177 (TLSTPLFNRY…RVASFMWIQS (100 aa)) constitute a Fe2OG dioxygenase domain. 3 residues coordinate Fe cation: His96, Asp98, and His158. Arg168 is a binding site for 2-oxoglutarate.

Fe(2+) serves as cofactor. The cofactor is L-ascorbate.

In Escherichia coli O6:K15:H31 (strain 536 / UPEC), this protein is PKHD-type hydroxylase YbiX.